The primary structure comprises 24 residues: Osteocalcin (24 aa).

Residues 1–24 form the Gla domain; sequence REVCELNPDCDELADHIGFQEAYR. Positions 2, 5, and 11 each coordinate Ca(2+). 4-carboxyglutamate is present on residues E2 and E5. C4 and C10 are disulfide-bonded.

It belongs to the osteocalcin/matrix Gla protein family. Gamma-carboxyglutamate residues are formed by vitamin K dependent carboxylation by GGCX. These residues are essential for the binding of calcium. Decarboxylation promotes the hormone activity.

The protein resides in the secreted. Its function is as follows. The carboxylated form is one of the main organic components of the bone matrix, which constitutes 1-2% of the total bone protein: it acts as a negative regulator of bone formation and is required to limit bone formation without impairing bone resorption or mineralization. The carboxylated form binds strongly to apatite and calcium. In terms of biological role, the uncarboxylated form acts as a hormone secreted by osteoblasts, which regulates different cellular processes, such as energy metabolism, male fertility and brain development. Regulates of energy metabolism by acting as a hormone favoring pancreatic beta-cell proliferation, insulin secretion and sensitivity and energy expenditure. Uncarboxylated osteocalcin hormone also promotes testosterone production in the testes: acts as a ligand for G protein-coupled receptor GPRC6A at the surface of Leydig cells, initiating a signaling response that promotes the expression of enzymes required for testosterone synthesis in a CREB-dependent manner. Also acts as a regulator of brain development: osteocalcin hormone crosses the blood-brain barrier and acts as a ligand for GPR158 on neurons, initiating a signaling response that prevents neuronal apoptosis in the hippocampus, favors the synthesis of all monoamine neurotransmitters and inhibits that of gamma-aminobutyric acid (GABA). Osteocalcin also crosses the placenta during pregnancy and maternal osteocalcin is required for fetal brain development. The protein is Osteocalcin of Homo sapiens neanderthalensis (Neanderthal).